We begin with the raw amino-acid sequence, 158 residues long: C-type lectin lectoxin-Enh4 (158 aa).

A signal peptide spans 1-23; sequence MGQFTVVSLGLLAMFLSLSGAKG. Disulfide bonds link Cys26–Cys37, Cys54–Cys154, and Cys129–Cys146. The C-type lectin domain occupies 33 to 155; it reads RNGVCNKLFP…CASLHPFICQ (123 aa). Residues 119 to 121 carry the Mannose-binding motif; it reads EPN. Residues Glu127, Asn142, and Asp143 each contribute to the Ca(2+) site.

Belongs to the true venom lectin family. In terms of tissue distribution, expressed by the venom gland.

Its subcellular location is the secreted. In terms of biological role, mannose-binding lectin which recognizes specific carbohydrate structures and agglutinates a variety of animal cells by binding to cell-surface glycoproteins and glycolipids. May be a calcium-dependent lectin. The chain is C-type lectin lectoxin-Enh4 from Pseudoferania polylepis (Macleay's water snake).